Consider the following 54-residue polypeptide: Anti-adapter protein SpxO (54 aa).

In terms of assembly, interacts with SpxH.

Its function is as follows. Inhibitor of Spx proteolytic control. Acts by interacting with SpxH/YjbH, which disrupts interaction between SpxH and Spx, and inhibits SpxH-enhanced proteolysis of Spx by ClpXP. Required for the stabilization of Spx and activation of Spx-regulated genes in response to cell wall stress. The sequence is that of Anti-adapter protein SpxO from Bacillus subtilis (strain 168).